The following is an 85-amino-acid chain: U4-theraphotoxin-Hhn1q (85 aa).

The first 22 residues, 1–22 (MKVTLIAILTCAAVLVLHTTAA), serve as a signal peptide directing secretion. The propeptide occupies 23–48 (EELEAESQLMEVGMPDTELAAVDEER). Disulfide bonds link cysteine 52–cysteine 66, cysteine 56–cysteine 77, and cysteine 71–cysteine 82.

This sequence belongs to the neurotoxin 12 (Hwtx-2) family. 02 (Hwtx-2) subfamily. As to expression, expressed by the venom gland.

It is found in the secreted. In terms of biological role, postsynaptic neurotoxin. In Cyriopagopus hainanus (Chinese bird spider), this protein is U4-theraphotoxin-Hhn1q.